A 640-amino-acid chain; its full sequence is MGKKKTRGEGSGLGRALIKERLNAGRGYRRNDTWLHTSELNDGYDWGRLNLQSVTEQSSLDDFLATAELAGTEFVAEKLNIKFVPAEARAGLLSSEESRRLKKLHEENKQLLRIPRRPPWDESTSPEVLQQTEKDSFLTWRRDLARLEEEQKLILTPFERNLDFWRQLWRVIERSDVVVQIVDARNPLLFRCPDLEKYVKEVSVHKVNMLLLNKADLLTREQRRAWARYFQKEGIRAVFWSALAEAQRLEAEERGEDAMDQEDQSDTEEETASKNATDHHEENSSSPNEEKDENEQDEEEEGEDERICVDESEWQTCSEESGDEDHAEENPESTATSSFYNSSRLLRKNELLEMFKSVHSGPTCKDGQITVGLVGYPNVGKSSTINTIFRNKKVSVSATPGHTKHFQTLFVEPGLCLCDCPGLVMPSFVSTKAEMICSGILPIDQMRDHVPAISLVCQNIPRNVLEGTYGINIIRPREDEDPDRPPTYEELLMAYGYMRGFMTAHGQPDQSRSARYVLKDYVSGKLLYCHPPPHINPEDFQPQHAKFAMRITGAEQIDGSGGKPSKVKRIENTVDKQFFHQANVRALTKGVQMVMGYKPGSGPVEAGKANTEQQAGKPWKKHGNRNKKEKVRRLNKHLDA.

Positions 165-426 constitute a CP-type G domain; the sequence is WRQLWRVIER…LCDCPGLVMP (262 aa). Residue 213-216 coordinates GTP; sequence NKAD. A disordered region spans residues 251–341; sequence AEERGEDAMD…ESTATSSFYN (91 aa). Composition is skewed to acidic residues over residues 253-270, 290-304, and 320-331; these read ERGEDAMDQEDQSDTEEE, EKDENEQDEEEEGED, and ESGDEDHAEENP. The segment covering 332 to 341 has biased composition (polar residues); sequence ESTATSSFYN. Residues 375-382 and 419-422 each bind GTP; these read GYPNVGKS and DCPG. The disordered stretch occupies residues 602 to 640; sequence GPVEAGKANTEQQAGKPWKKHGNRNKKEKVRRLNKHLDA. Residues 618–640 are compositionally biased toward basic residues; the sequence is PWKKHGNRNKKEKVRRLNKHLDA.

This sequence belongs to the TRAFAC class YlqF/YawG GTPase family. LSG1 subfamily.

It localises to the cytoplasm. It is found in the endoplasmic reticulum. The protein resides in the nucleus. The protein localises to the cajal body. It carries out the reaction GTP + H2O = GDP + phosphate + H(+). In terms of biological role, functions as a GTPase. May act by mediating the release of NMD3 from the 60S ribosomal subunit after export into the cytoplasm during the 60S ribosomal subunit maturation. This chain is Large subunit GTPase 1 homolog, found in Danio rerio (Zebrafish).